Here is a 185-residue protein sequence, read N- to C-terminus: Bacteriocin UviA (185 aa).

Functionally, may have a role in bacteriocin secretion or immunity. The polypeptide is Bacteriocin UviA (uviA) (Clostridium perfringens).